The primary structure comprises 416 residues: Signal recognition particle receptor FtsY (416 aa).

The span at 1 to 10 (MFSFFRRKKK) shows a compositional bias: basic residues. A disordered region spans residues 1-24 (MFSFFRRKKKQETPALEEAQVQET). GTP is bound by residues 224-231 (GINGAGKT), 304-308 (DTAGR), and 368-371 (TKLD).

This sequence belongs to the GTP-binding SRP family. FtsY subfamily. In terms of assembly, part of the signal recognition particle protein translocation system, which is composed of SRP and FtsY. SRP is a ribonucleoprotein composed of Ffh and a 4.5S RNA molecule. The cofactor is Mg(2+).

The protein resides in the cell membrane. The protein localises to the cytoplasm. It carries out the reaction GTP + H2O = GDP + phosphate + H(+). Functionally, involved in targeting and insertion of nascent membrane proteins into the cytoplasmic membrane. Acts as a receptor for the complex formed by the signal recognition particle (SRP) and the ribosome-nascent chain (RNC). Interaction with SRP-RNC leads to the transfer of the RNC complex to the Sec translocase for insertion into the membrane, the hydrolysis of GTP by both Ffh and FtsY, and the dissociation of the SRP-FtsY complex into the individual components. The protein is Signal recognition particle receptor FtsY of Neisseria gonorrhoeae.